Here is a 75-residue protein sequence, read N- to C-terminus: Putative UPF0377 protein YJL222W-A (75 aa).

It belongs to the UPF0377 family.

The polypeptide is Putative UPF0377 protein YJL222W-A (Saccharomyces cerevisiae (strain ATCC 204508 / S288c) (Baker's yeast)).